The sequence spans 1021 residues: Ephrin type-B receptor 6 (1021 aa).

Residues 1 to 31 (MATEGAAQLGNRVAGMVCSLWVLLLVSSVLA) form the signal peptide. Topologically, residues 32–594 (LEEVLLDTTG…LSSQLPERLS (563 aa)) are extracellular. The Eph LBD domain occupies 33–237 (EEVLLDTTGE…FSYTCPAVLR (205 aa)). The tract at residues 163-182 (SFPSSSSSSSSSSSAAWAVG) is disordered. The span at 166–176 (SSSSSSSSSSS) shows a compositional bias: low complexity. 2 Fibronectin type-III domains span residues 369–486 (PPSA…TSHE) and 487–582 (VPSA…TLPQ). N-linked (GlcNAc...) asparagine glycosylation occurs at N480. Residues 595 to 615 (LVIGSILGALAFLLLAAITVL) form a helical membrane-spanning segment. Residues 616 to 1021 (AVVFQRKRRG…HLRQQGSVEV (406 aa)) are Cytoplasmic-facing. Residues 670–919 (IKIEEVIGTG…QLVAAFDKMI (250 aa)) form the Protein kinase domain. 676–684 (IGTGSFGEV) is an ATP binding site. One can recognise an SAM domain in the interval 948–1012 (PCLDSPQAWL…LHHIQLLQQH (65 aa)). The short motif at 1019-1021 (VEV) is the PDZ-binding element.

This sequence belongs to the protein kinase superfamily. Tyr protein kinase family. Ephrin receptor subfamily. Interacts with CBL and EPHB1. Interacts with FYN; this interaction takes place in a ligand-independent manner. Ligand-binding increases phosphorylation on tyrosine residues. Phosphorylation on tyrosine residues is mediated by transphosphorylation by the catalytically active EPHB1 in a ligand-independent manner. Tyrosine phosphorylation of the receptor may act as a switch on the functional transition from cell adhesion/attraction to de-adhesion/repulsion. In terms of tissue distribution, expressed in brain. Expressed in non invasive breast carcinoma cell lines (at protein level). Strong expression in brain and pancreas, and weak expression in other tissues, such as heart, placenta, lung, liver, skeletal muscle and kidney. Expressed in breast non invasive tumors but not in metastatic lesions. Isoform 3 is expressed in cell lines of glioblastomas, anaplastic astrocytomas, gliosarcomas and astrocytomas. Isoform 3 is not detected in normal tissues.

It localises to the membrane. The protein localises to the secreted. In terms of biological role, kinase-defective receptor for members of the ephrin-B family. Binds to ephrin-B1 and ephrin-B2. Modulates cell adhesion and migration by exerting both positive and negative effects upon stimulation with ephrin-B2. Inhibits JNK activation, T-cell receptor-induced IL-2 secretion and CD25 expression upon stimulation with ephrin-B2. In Homo sapiens (Human), this protein is Ephrin type-B receptor 6 (EPHB6).